We begin with the raw amino-acid sequence, 170 residues long: Small ribosomal subunit protein uS5 (170 aa).

The S5 DRBM domain maps to 11–74; the sequence is ILEKLVHINR…ETARRVLIHV (64 aa).

Belongs to the universal ribosomal protein uS5 family. As to quaternary structure, part of the 30S ribosomal subunit. Contacts proteins S4 and S8.

Its function is as follows. With S4 and S12 plays an important role in translational accuracy. In terms of biological role, located at the back of the 30S subunit body where it stabilizes the conformation of the head with respect to the body. The sequence is that of Small ribosomal subunit protein uS5 from Pelagibacter ubique (strain HTCC1062).